The following is a 346-amino-acid chain: Probable RNA methyltransferase PA14_40730 (346 aa).

Glutamate 91 functions as the Proton acceptor in the catalytic mechanism. Residues 94 to 320 (LLPRGGLCVS…TKVRNSAGQD (227 aa)) enclose the Radical SAM core domain. A disulfide bridge links cysteine 101 with cysteine 325. The [4Fe-4S] cluster site is built by cysteine 108, cysteine 112, and cysteine 115. Residues 153-154 (GE), serine 183, 206-208 (SLH), and asparagine 282 contribute to the S-adenosyl-L-methionine site. The active-site S-methylcysteine intermediate is cysteine 325.

This sequence belongs to the radical SAM superfamily. RlmN family. Requires [4Fe-4S] cluster as cofactor.

Its subcellular location is the cytoplasm. The protein is Probable RNA methyltransferase PA14_40730 of Pseudomonas aeruginosa (strain UCBPP-PA14).